We begin with the raw amino-acid sequence, 77 residues long: Delta-conotoxin GmVIA (77 aa).

Residues 1-22 form the signal peptide; sequence MKLTCMMIVAVLFLTAWTFVTA. Positions 23–48 are excised as a propeptide; the sequence is DDSGNGMEILFPKAGHEMENLEVSNR. Intrachain disulfides connect cysteine 52/cysteine 67, cysteine 59/cysteine 72, and cysteine 66/cysteine 76.

The protein belongs to the conotoxin O1 superfamily. As to expression, expressed by the venom duct.

The protein resides in the secreted. Functionally, delta-conotoxins bind to site 6 of voltage-gated sodium channels (Nav) and inhibit the inactivation process. This toxin shows weak activity on rNav1.2/SCN2A (EC(50)=2.5 uM) and rNav1.4/SCN4A (EC(50)=4.8 uM). In vivo, injection of this peptide in the head region of garden snail induces retraction of the head and body into shell. This is followed by secretion of viscous green slime and a convulsive undulation into and out of the shell. No apparent biological activity was observed when a much greater dose of peptide was injected intraperitoneally into mice. This chain is Delta-conotoxin GmVIA, found in Conus gloriamaris (Glory-of-the-Sea cone).